The primary structure comprises 329 residues: Cathepsin K (329 aa).

Positions Met-1 to Ala-15 are cleaved as a signal peptide. The propeptide at Leu-16 to Arg-114 is activation peptide. A glycan (N-linked (GlcNAc...) asparagine) is linked at Asn-103. Intrachain disulfides connect Cys-136–Cys-177 and Cys-170–Cys-210. Cys-139 is a catalytic residue. A glycan (N-linked (GlcNAc...) asparagine) is linked at Asn-213. A disulfide bond links Cys-269 and Cys-318. Active-site residues include His-276 and Asn-296.

It belongs to the peptidase C1 family.

It localises to the lysosome. Its subcellular location is the secreted. The protein resides in the apical cell membrane. It catalyses the reaction Broad proteolytic activity. With small-molecule substrates and inhibitors, the major determinant of specificity is P2, which is preferably Leu, Met &gt; Phe, and not Arg.. Its function is as follows. Thiol protease involved in osteoclastic bone resorption and may participate partially in the disorder of bone remodeling. Displays potent endoprotease activity against fibrinogen at acid pH. May play an important role in extracellular matrix degradation. Involved in the release of thyroid hormone thyroxine (T4) by limited proteolysis of TG/thyroglobulin in the thyroid follicle lumen. This is Cathepsin K (Ctsk) from Rattus norvegicus (Rat).